The primary structure comprises 190 residues: Embryo-specific protein ATS3B (190 aa).

An N-terminal signal peptide occupies residues 1-24; sequence MASVRLFFTLISFVFIISTSVYES. Residue asparagine 37 is glycosylated (N-linked (GlcNAc...) asparagine). The PLAT domain maps to 48-158; that stretch reads CAYTVIISTS…ESVWYGFNYC (111 aa).

Interacts with EULS3 (via N-terminus). Expressed in roots, rosette leaves, stems, cauline leaves and flowers.

It is found in the secreted. May play a role during embryo development. The sequence is that of Embryo-specific protein ATS3B from Arabidopsis thaliana (Mouse-ear cress).